We begin with the raw amino-acid sequence, 39 residues long: Conotoxin Cl14.7 (39 aa).

Residues 1–15 (MGDLSEADSMKHQLQ) constitute a propeptide that is removed on maturation.

Post-translationally, contains 2 disulfide bonds. Expressed by the venom duct.

Its subcellular location is the secreted. This chain is Conotoxin Cl14.7, found in Californiconus californicus (California cone).